Reading from the N-terminus, the 981-residue chain is Mediator of RNA polymerase II transcription subunit 5 (981 aa).

The protein belongs to the Mediator complex subunit 5 family. In terms of assembly, component of the Mediator complex.

The protein resides in the nucleus. Its function is as follows. Component of the Mediator complex, a coactivator involved in the regulated transcription of nearly all RNA polymerase II-dependent genes. Mediator functions as a bridge to convey information from gene-specific regulatory proteins to the basal RNA polymerase II transcription machinery. Mediator is recruited to promoters by direct interactions with regulatory proteins and serves as a scaffold for the assembly of a functional preinitiation complex with RNA polymerase II and the general transcription factors. The protein is Mediator of RNA polymerase II transcription subunit 5 (NUT1) of Scheffersomyces stipitis (strain ATCC 58785 / CBS 6054 / NBRC 10063 / NRRL Y-11545) (Yeast).